Consider the following 507-residue polypeptide: Dihydrolipoyllysine-residue acetyltransferase component of pyruvate dehydrogenase complex, mitochondrial (507 aa).

One can recognise a Lipoyl-binding domain in the interval 77–153 (HNRVALPALS…PIGKLLCIIV (77 aa)). Lys-118 is modified (N6-lipoyllysine). 2 disordered regions span residues 168 to 223 (DGAS…VSAS) and 248 to 270 (RILA…TQAV). The Peripheral subunit-binding (PSBD) domain maps to 221 to 258 (SASPFAKKLAAENGLDLSGVSGSGPGGRILASDLSQAP). Active-site residues include His-480 and Asp-484.

This sequence belongs to the 2-oxoacid dehydrogenase family. Requires (R)-lipoate as cofactor.

It is found in the mitochondrion matrix. It carries out the reaction N(6)-[(R)-dihydrolipoyl]-L-lysyl-[protein] + acetyl-CoA = N(6)-[(R)-S(8)-acetyldihydrolipoyl]-L-lysyl-[protein] + CoA. Functionally, the pyruvate dehydrogenase complex catalyzes the overall conversion of pyruvate to acetyl-CoA and CO(2). It contains multiple copies of three enzymatic components: pyruvate dehydrogenase (E1), dihydrolipoamide acetyltransferase (E2) and lipoamide dehydrogenase (E3). The chain is Dihydrolipoyllysine-residue acetyltransferase component of pyruvate dehydrogenase complex, mitochondrial from Caenorhabditis elegans.